We begin with the raw amino-acid sequence, 142 residues long: Small ribosomal subunit protein bS6 (142 aa).

The segment covering 110–133 (NKKPSHAKEKHEKTEHTHSHHTEE) has biased composition (basic and acidic residues). The segment at 110 to 142 (NKKPSHAKEKHEKTEHTHSHHTEEAESVGSHSE) is disordered.

The protein belongs to the bacterial ribosomal protein bS6 family.

Its function is as follows. Binds together with bS18 to 16S ribosomal RNA. The protein is Small ribosomal subunit protein bS6 (rpsF) of Helicobacter pylori (strain ATCC 700392 / 26695) (Campylobacter pylori).